The following is a 71-amino-acid chain: MKKGIHPEMKLVTVKCACGAEHTFYTTVDNIRIDVCSNCHPFYTSGGKGGVLIVDTEGRVEKFRRKYGDNY.

Residues Cys-16, Cys-18, Cys-36, and Cys-39 each contribute to the Zn(2+) site.

It belongs to the bacterial ribosomal protein bL31 family. Type A subfamily. As to quaternary structure, part of the 50S ribosomal subunit. Requires Zn(2+) as cofactor.

Its function is as follows. Binds the 23S rRNA. In Thermotoga maritima (strain ATCC 43589 / DSM 3109 / JCM 10099 / NBRC 100826 / MSB8), this protein is Large ribosomal subunit protein bL31.